We begin with the raw amino-acid sequence, 480 residues long: Protein nucleotidyltransferase YdiU (480 aa).

Glycine 87, glycine 89, arginine 90, lysine 110, aspartate 122, glycine 123, arginine 173, and arginine 180 together coordinate ATP. The active-site Proton acceptor is aspartate 245. Mg(2+) contacts are provided by asparagine 246 and aspartate 255. Aspartate 255 contributes to the ATP binding site.

The protein belongs to the SELO family. Mg(2+) serves as cofactor. Requires Mn(2+) as cofactor.

The catalysed reaction is L-seryl-[protein] + ATP = 3-O-(5'-adenylyl)-L-seryl-[protein] + diphosphate. The enzyme catalyses L-threonyl-[protein] + ATP = 3-O-(5'-adenylyl)-L-threonyl-[protein] + diphosphate. It carries out the reaction L-tyrosyl-[protein] + ATP = O-(5'-adenylyl)-L-tyrosyl-[protein] + diphosphate. It catalyses the reaction L-histidyl-[protein] + UTP = N(tele)-(5'-uridylyl)-L-histidyl-[protein] + diphosphate. The catalysed reaction is L-seryl-[protein] + UTP = O-(5'-uridylyl)-L-seryl-[protein] + diphosphate. The enzyme catalyses L-tyrosyl-[protein] + UTP = O-(5'-uridylyl)-L-tyrosyl-[protein] + diphosphate. Its function is as follows. Nucleotidyltransferase involved in the post-translational modification of proteins. It can catalyze the addition of adenosine monophosphate (AMP) or uridine monophosphate (UMP) to a protein, resulting in modifications known as AMPylation and UMPylation. The polypeptide is Protein nucleotidyltransferase YdiU (Jannaschia sp. (strain CCS1)).